The primary structure comprises 559 residues: Formate--tetrahydrofolate ligase (559 aa).

67–74 (TPAGEGKS) contributes to the ATP binding site.

This sequence belongs to the formate--tetrahydrofolate ligase family.

It catalyses the reaction (6S)-5,6,7,8-tetrahydrofolate + formate + ATP = (6R)-10-formyltetrahydrofolate + ADP + phosphate. It functions in the pathway one-carbon metabolism; tetrahydrofolate interconversion. This is Formate--tetrahydrofolate ligase from Lactobacillus delbrueckii subsp. bulgaricus (strain ATCC 11842 / DSM 20081 / BCRC 10696 / JCM 1002 / NBRC 13953 / NCIMB 11778 / NCTC 12712 / WDCM 00102 / Lb 14).